A 289-amino-acid polypeptide reads, in one-letter code: Thiazole synthase (289 aa).

Catalysis depends on lysine 132, which acts as the Schiff-base intermediate with DXP. Residues glycine 193, 219 to 220, and 241 to 242 each bind 1-deoxy-D-xylulose 5-phosphate; these read AG and NT.

This sequence belongs to the ThiG family. In terms of assembly, homotetramer. Forms heterodimers with either ThiH or ThiS.

The protein resides in the cytoplasm. It catalyses the reaction [ThiS sulfur-carrier protein]-C-terminal-Gly-aminoethanethioate + 2-iminoacetate + 1-deoxy-D-xylulose 5-phosphate = [ThiS sulfur-carrier protein]-C-terminal Gly-Gly + 2-[(2R,5Z)-2-carboxy-4-methylthiazol-5(2H)-ylidene]ethyl phosphate + 2 H2O + H(+). It participates in cofactor biosynthesis; thiamine diphosphate biosynthesis. Its function is as follows. Catalyzes the rearrangement of 1-deoxy-D-xylulose 5-phosphate (DXP) to produce the thiazole phosphate moiety of thiamine. Sulfur is provided by the thiocarboxylate moiety of the carrier protein ThiS. In vitro, sulfur can be provided by H(2)S. The chain is Thiazole synthase from Rhodospirillum rubrum (strain ATCC 11170 / ATH 1.1.1 / DSM 467 / LMG 4362 / NCIMB 8255 / S1).